Reading from the N-terminus, the 76-residue chain is Alpha/kappa-conotoxin-like fe14.1 (76 aa).

Positions 1-24 (MPSVRSVTCCCLLWMMLSVQLVTP) are cleaved as a signal peptide. The propeptide occupies 25-39 (GSPGTAQLSGHRTAR). Intrachain disulfides connect C46–C61 and C50–C63. R64 carries the arginine amide modification. A propeptide spanning residues 65-76 (GKRDVVSSSMAV) is cleaved from the precursor.

This sequence belongs to the conotoxin J superfamily. In terms of tissue distribution, expressed by the venom duct.

The protein resides in the secreted. Its function is as follows. Highly inhibits both nicotinic acetylcholine receptors (neuronal (alpha-3/beta-4) and muscular (alpha-1/beta-1/epsilon/delta) subtypes) and the voltage-gated potassium channel Kv1.6/KCNA6 subtype. In Conus ferrugineus (Cone snail), this protein is Alpha/kappa-conotoxin-like fe14.1.